The chain runs to 221 residues: Molybdenum cofactor guanylyltransferase (221 aa).

Residues 18-20 (IAG), Lys35, Asn63, Asp81, and Asp112 contribute to the GTP site. Asp112 is a binding site for Mg(2+).

The protein belongs to the MobA family. As to quaternary structure, monomer. Mg(2+) serves as cofactor.

It is found in the cytoplasm. The enzyme catalyses Mo-molybdopterin + GTP + H(+) = Mo-molybdopterin guanine dinucleotide + diphosphate. In terms of biological role, transfers a GMP moiety from GTP to Mo-molybdopterin (Mo-MPT) cofactor (Moco or molybdenum cofactor) to form Mo-molybdopterin guanine dinucleotide (Mo-MGD) cofactor. The polypeptide is Molybdenum cofactor guanylyltransferase (Brucella melitensis biotype 2 (strain ATCC 23457)).